Reading from the N-terminus, the 427-residue chain is Enolase (427 aa).

Glutamine 163 contributes to the (2R)-2-phosphoglycerate binding site. Glutamate 205 acts as the Proton donor in catalysis. Residues aspartate 242, glutamate 287, and aspartate 314 each coordinate Mg(2+). (2R)-2-phosphoglycerate-binding residues include lysine 339, arginine 368, serine 369, and lysine 390. The active-site Proton acceptor is lysine 339.

It belongs to the enolase family. Requires Mg(2+) as cofactor.

The protein resides in the cytoplasm. Its subcellular location is the secreted. It localises to the cell surface. The enzyme catalyses (2R)-2-phosphoglycerate = phosphoenolpyruvate + H2O. It functions in the pathway carbohydrate degradation; glycolysis; pyruvate from D-glyceraldehyde 3-phosphate: step 4/5. In terms of biological role, catalyzes the reversible conversion of 2-phosphoglycerate (2-PG) into phosphoenolpyruvate (PEP). It is essential for the degradation of carbohydrates via glycolysis. This chain is Enolase, found in Solibacter usitatus (strain Ellin6076).